The following is a 319-amino-acid chain: Ribonuclease Z (319 aa).

Residues H62, H64, D66, H67, H145, D215, and H273 each coordinate Zn(2+). D66 acts as the Proton acceptor in catalysis.

Belongs to the RNase Z family. Homodimer. Zn(2+) is required as a cofactor.

The catalysed reaction is Endonucleolytic cleavage of RNA, removing extra 3' nucleotides from tRNA precursor, generating 3' termini of tRNAs. A 3'-hydroxy group is left at the tRNA terminus and a 5'-phosphoryl group is left at the trailer molecule.. Functionally, zinc phosphodiesterase, which displays some tRNA 3'-processing endonuclease activity. Probably involved in tRNA maturation, by removing a 3'-trailer from precursor tRNA. In Borreliella afzelii (strain PKo) (Borrelia afzelii), this protein is Ribonuclease Z.